Consider the following 226-residue polypeptide: Orotate phosphoribosyltransferase (226 aa).

Position 30 (Lys30) interacts with 5-phospho-alpha-D-ribose 1-diphosphate. Residue 38–39 (FF) participates in orotate binding. 5-phospho-alpha-D-ribose 1-diphosphate-binding positions include 76-77 (YK), Arg106, Lys107, Lys110, His112, and 132-140 (DDVMTAGTA). The orotate site is built by Thr136 and Arg164.

It belongs to the purine/pyrimidine phosphoribosyltransferase family. PyrE subfamily. Homodimer.

It catalyses the reaction orotidine 5'-phosphate + diphosphate = orotate + 5-phospho-alpha-D-ribose 1-diphosphate. It functions in the pathway pyrimidine metabolism; UMP biosynthesis via de novo pathway; UMP from orotate: step 1/2. Catalyzes the transfer of a ribosyl phosphate group from 5-phosphoribose 1-diphosphate to orotate, leading to the formation of orotidine monophosphate (OMP). This is Orotate phosphoribosyltransferase (URA5) from Kluyveromyces lactis (strain ATCC 8585 / CBS 2359 / DSM 70799 / NBRC 1267 / NRRL Y-1140 / WM37) (Yeast).